A 286-amino-acid chain; its full sequence is tRNA (guanine-N(7)-)-methyltransferase (286 aa).

S-adenosyl-L-methionine is bound by residues glutamate 91, glutamate 116, asparagine 143, and aspartate 165. Residue aspartate 165 is part of the active site. Substrate contacts are provided by residues lysine 169, aspartate 201, and 262-265 (TNFE).

The protein belongs to the class I-like SAM-binding methyltransferase superfamily. TrmB family.

The catalysed reaction is guanosine(46) in tRNA + S-adenosyl-L-methionine = N(7)-methylguanosine(46) in tRNA + S-adenosyl-L-homocysteine. The protein operates within tRNA modification; N(7)-methylguanine-tRNA biosynthesis. Functionally, catalyzes the formation of N(7)-methylguanine at position 46 (m7G46) in tRNA. This chain is tRNA (guanine-N(7)-)-methyltransferase, found in Bifidobacterium longum subsp. infantis (strain ATCC 15697 / DSM 20088 / JCM 1222 / NCTC 11817 / S12).